The sequence spans 115 residues: MNRELGLWGEELAAQYLRKKGYKILERNFHTRYGELDLVCEKDDNIVFVEVKTRRSTRFGSPEEAVTPRKIGNLKKAAILYLKSTPRFFPEISFDVVSILVEDGKSKINHIINAF.

The protein belongs to the UPF0102 family.

This Syntrophomonas wolfei subsp. wolfei (strain DSM 2245B / Goettingen) protein is UPF0102 protein Swol_1475.